A 95-amino-acid chain; its full sequence is Antitoxin VapB41 (95 aa).

Antitoxin component of a type II toxin-antitoxin (TA) system. The protein is Antitoxin VapB41 (vapB41) of Mycobacterium tuberculosis (strain CDC 1551 / Oshkosh).